A 554-amino-acid chain; its full sequence is MFCIQCEQTIRTPAGNGCSYSQGMCGKLAATSDLQDLLIYILQGVSAYAEKARAFGIIVPAIDTFVPKAFFATLTNVNFDDERIMAYTQQAYGYRAQLQAAYESACKAQGQAIETLIPAASLVLASVKEEMLALAAQALPNRGKEEVNEDIMGLRLLCLYGLKGAAAYMEHARVLDQTDSEVAAKFHEIMAFLGSDSVDADKLFATAMEIGQLNYRVMAMLDEGETQAFGHPEPTQVNTVAVKGKAILVSGHDMKDLELILQQTEGKGINVFTHGEMLPALAYPELKKYPHLVGNYGSAWQNQQKEFANFPGAVVMTSNCIIDPNVGDYADRIFTRSIVGWPGVTHIVGDDFSAVIDKALSLEGFAYDEIPHHITIGFARNALMAAAPAVVENVKNGSIKHFFLVGGCDGDKAERSYFTDIAKAAPKDSIIMTLGCGKYKFNKLAFGDINGIPRLLDIGQCNDAYSAIQLAIALSEVFECEINELPLSLVLSWFEQKAIVILLTLLSLGVKNIRTGPSAPAFLTPNLLKVLEDKFGLRSTTTVEQDLNAILNVA.

Residues C3, C6, C18, and C25 each coordinate [2Fe-2S] cluster. The hybrid [4Fe-2O-2S] cluster site is built by H252, E276, C320, C408, C436, C461, E495, and K497. C408 is subject to Cysteine persulfide.

Belongs to the HCP family. It depends on [2Fe-2S] cluster as a cofactor. Requires hybrid [4Fe-2O-2S] cluster as cofactor.

It localises to the cytoplasm. The catalysed reaction is A + NH4(+) + H2O = hydroxylamine + AH2 + H(+). In terms of biological role, catalyzes the reduction of hydroxylamine to form NH(3) and H(2)O. The protein is Hydroxylamine reductase of Shewanella loihica (strain ATCC BAA-1088 / PV-4).